Here is a 111-residue protein sequence, read N- to C-terminus: MEQRNNVFQAKYNEYKQILEELQTKIIELGHDKDEHTIVIKTLKDAEPTRKCYRMIGGALVESDVQTSLPILETKKENIEGTISKMKETLIQTAKEFEKWKKDNKIQVVKN.

Coiled coils occupy residues 1–36 and 72–92; these read MEQR…KDEH and LETK…TLIQ.

It belongs to the prefoldin subunit beta family. In terms of assembly, heterohexamer of two PFD-alpha type and four PFD-beta type subunits.

Its subcellular location is the cytoplasm. In terms of biological role, binds specifically to cytosolic chaperonin (c-CPN) and transfers target proteins to it. Binds to nascent polypeptide chain and promotes folding in an environment in which there are many competing pathways for nonnative proteins. This is Prefoldin subunit 2 (GIM4) from Saccharomyces cerevisiae (strain ATCC 204508 / S288c) (Baker's yeast).